A 158-amino-acid polypeptide reads, in one-letter code: Probable flavodoxin 1 (158 aa).

The Flavodoxin-like domain maps to Ala4–Leu144.

This sequence belongs to the flavodoxin family. Requires FMN as cofactor.

In terms of biological role, low-potential electron donor to a number of redox enzymes. The sequence is that of Probable flavodoxin 1 (ykuN) from Bacillus subtilis (strain 168).